We begin with the raw amino-acid sequence, 291 residues long: Glucose and ribitol dehydrogenase (291 aa).

Residues 1 to 35 are disordered; that stretch reads MASGGQFPPQKQESQPGKEHLMDPSPQHASPHYKP. 45-69 serves as a coordination point for NAD(+); that stretch reads LVTGGDSGIGRSVCYHFALEGATVA. A substrate-binding site is contributed by Ser183. Tyr196 functions as the Proton acceptor in the catalytic mechanism.

The protein belongs to the short-chain dehydrogenases/reductases (SDR) family. As to expression, expressed in embryogenic cells, somatic embryos and seeds in the later stages of development, but not in non-embryogenic cells and mature leaves.

Functionally, may act as a short alcohol-polyol-sugar dehydrogenase possibly related to carbohydrate metabolism and the acquisition of desiccation tolerance. May also be involved in signal transduction. This chain is Glucose and ribitol dehydrogenase (CAISE5), found in Daucus carota (Wild carrot).